The sequence spans 35 residues: UPF0387 membrane protein YohO (35 aa).

The helical transmembrane segment at 6 to 26 (IGVIALFLFMALGGIGGVMLA) threads the bilayer.

Belongs to the UPF0387 family.

The protein resides in the cell inner membrane. This is UPF0387 membrane protein YohO from Shigella boydii serotype 4 (strain Sb227).